Consider the following 988-residue polypeptide: DNA polymerase (988 aa).

This sequence belongs to the DNA polymerase type-B family. As to quaternary structure, interacts with A20. Component of the Uracil-DNA glycosylase(UDG)-A20-polymerase complex; A20 and UDG form a heterodimeric processivity factor that associates with E9 to form the processive polymerase holoenzyme.

It carries out the reaction DNA(n) + a 2'-deoxyribonucleoside 5'-triphosphate = DNA(n+1) + diphosphate. Its function is as follows. Catalyzes DNA synthesis. Acquires processivity by associating with a heterodimeric processivity factor comprised of the viral A20 and D4 proteins, thereby forming the DNA polymerase holoenzyme. Displays 3'- to 5' exonuclease activity. Might participate in viral DNA recombination. Does not perform translesion synthesis across an abasic site. This is DNA polymerase (POL) from Vertebrata (FPV).